A 388-amino-acid polypeptide reads, in one-letter code: MDALEITQKLISYPTITPKECGIFEYIKSLFPAFKTLECEKNGVKNLFLYRIFNPLKKHAEKEHAKEKHVKENVKPLHFCFAGHIDVVPPGNNWQSDPFKPIIKEGFLYGRGAQDMKGGVGAFLSASLNFNPKTPFLLSILLTSDEEGPGIFGTRLMLEKLKEKDLLPHMAIVAEPTCEKVLGDSIKIGRRGSINGKLILKGVQGHVAYPQKCQNPIDTLASVLPLISGVHLDNGDECFDPSKLVITNLHAGLGANNVTPGSVEIAFNARHSLKTTQESLKEYLEKVLKDLPYTLELESSSSPFITASHSKLTSVLQENILKTCHTTPLLNTKGGTSDARFFSAHGIEVVEFGAINDRIHAVDERVSLKELELLEKVFLGVLEGLSEK.

His84 contacts Zn(2+). The active site involves Asp86. Zn(2+) is bound at residue Asp115. Glu146 (proton acceptor) is an active-site residue. Positions 147, 175, and 360 each coordinate Zn(2+).

It belongs to the peptidase M20A family. DapE subfamily. In terms of assembly, homodimer. It depends on Zn(2+) as a cofactor. Co(2+) serves as cofactor.

It carries out the reaction N-succinyl-(2S,6S)-2,6-diaminopimelate + H2O = (2S,6S)-2,6-diaminopimelate + succinate. Its pathway is amino-acid biosynthesis; L-lysine biosynthesis via DAP pathway; LL-2,6-diaminopimelate from (S)-tetrahydrodipicolinate (succinylase route): step 3/3. Its function is as follows. Catalyzes the hydrolysis of N-succinyl-L,L-diaminopimelic acid (SDAP), forming succinate and LL-2,6-diaminopimelate (DAP), an intermediate involved in the bacterial biosynthesis of lysine and meso-diaminopimelic acid, an essential component of bacterial cell walls. This is Succinyl-diaminopimelate desuccinylase from Helicobacter pylori (strain J99 / ATCC 700824) (Campylobacter pylori J99).